Here is a 352-residue protein sequence, read N- to C-terminus: Photosystem II D2 protein (352 aa).

Residue threonine 2 is modified to N-acetylthreonine. The residue at position 2 (threonine 2) is a Phosphothreonine. Residues 40–60 (CAYFAVGGWLTGTTFVTSWYT) form a helical membrane-spanning segment. Residue histidine 117 participates in chlorophyll a binding. Residues 124 to 140 (GFMLRQFEIARAIGLRP) traverse the membrane as a helical segment. The pheophytin a site is built by glutamine 129 and asparagine 142. The chain crosses the membrane as a helical span at residues 152 to 165 (VFVSVFLIYPLGQS). Histidine 197 is a binding site for chlorophyll a. Residues 207-227 (AALLCAIHGATVENTLFEDGD) form a helical membrane-spanning segment. A plastoquinone contacts are provided by histidine 214 and phenylalanine 261. Histidine 214 is a Fe cation binding site. A Fe cation-binding site is contributed by histidine 268. The chain crosses the membrane as a helical span at residues 278 to 294 (GLWMSAIGVVGLALNLR).

This sequence belongs to the reaction center PufL/M/PsbA/D family. In terms of assembly, PSII is composed of 1 copy each of membrane proteins PsbA, PsbB, PsbC, PsbD, PsbE, PsbF, PsbH, PsbI, PsbJ, PsbK, PsbL, PsbM, PsbT, PsbX, PsbY, PsbZ, Psb30/Ycf12, at least 3 peripheral proteins of the oxygen-evolving complex and a large number of cofactors. It forms dimeric complexes. Requires The D1/D2 heterodimer binds P680, chlorophylls that are the primary electron donor of PSII, and subsequent electron acceptors. It shares a non-heme iron and each subunit binds pheophytin, quinone, additional chlorophylls, carotenoids and lipids. There is also a Cl(-1) ion associated with D1 and D2, which is required for oxygen evolution. The PSII complex binds additional chlorophylls, carotenoids and specific lipids. as cofactor.

The protein resides in the plastid. It localises to the chloroplast thylakoid membrane. It catalyses the reaction 2 a plastoquinone + 4 hnu + 2 H2O = 2 a plastoquinol + O2. Photosystem II (PSII) is a light-driven water:plastoquinone oxidoreductase that uses light energy to abstract electrons from H(2)O, generating O(2) and a proton gradient subsequently used for ATP formation. It consists of a core antenna complex that captures photons, and an electron transfer chain that converts photonic excitation into a charge separation. The D1/D2 (PsbA/PsbD) reaction center heterodimer binds P680, the primary electron donor of PSII as well as several subsequent electron acceptors. D2 is needed for assembly of a stable PSII complex. The protein is Photosystem II D2 protein of Nephroselmis olivacea (Green alga).